An 882-amino-acid polypeptide reads, in one-letter code: Alanine--tRNA ligase (882 aa).

H570, H574, C672, and H676 together coordinate Zn(2+).

Belongs to the class-II aminoacyl-tRNA synthetase family. It depends on Zn(2+) as a cofactor.

It is found in the cytoplasm. It catalyses the reaction tRNA(Ala) + L-alanine + ATP = L-alanyl-tRNA(Ala) + AMP + diphosphate. Catalyzes the attachment of alanine to tRNA(Ala) in a two-step reaction: alanine is first activated by ATP to form Ala-AMP and then transferred to the acceptor end of tRNA(Ala). Also edits incorrectly charged Ser-tRNA(Ala) and Gly-tRNA(Ala) via its editing domain. This chain is Alanine--tRNA ligase, found in Xanthomonas campestris pv. campestris (strain B100).